The following is a 193-amino-acid chain: Cerebellin-1 (193 aa).

The signal sequence occupies residues 1-21 (MLGVLELLLLGAAWLAGPARG). Asn23 carries N-linked (GlcNAc...) asparagine glycosylation. The essential for interaction with NRXN1 and linker of two C1q trimers into disulfide-linked hexamers stretch occupies residues 34 to 38 (CLVVC). A C1q domain is found at 57–193 (SGSAKVAFSA…TFSGFLVFPL (137 aa)). Residues 62 to 193 (VAFSAIRSTN…TFSGFLVFPL (132 aa)) are necessary for interaction with CBLN3, and homotrimerization. Asn79 is a glycosylation site (N-linked (GlcNAc...) asparagine). The interval 122–147 (YNRQTIQVSLMLNGWPVISAFAGDQD) is essential for interaction with GRID2.

In terms of assembly, homohexamer; disulfide-linked homotrimers. The trimers associate via N-terminal cysteine residues to form disulfide-linked hexamers. May form oligomers with CBLN2, CBLN3 AND CBLN4 prior to secretion. Once secreted, does not interact with other CBLN family members. Interacts with GRID1. Interacts with NRXN1 and NRXN2 long (alpha) and short (beta) isoforms produced by alternative promoter usage. Competes with NLGN1 for NRXN1-binding. Weakly interacts with NRXN3 short isoform and not at all with NRXN3 long isoform. Interacts (via C1q domain) with GRID2; GRID2-binding is calcium-independent; CBLN1 hexamers anchor GRID2 N-terminal domain dimers to monomeric NRXN1 isoform beta; promotes synaptogenesis and mediates the D-Serine-dependent long term depression signals and AMPA receptor endocytosis. Interacts with OTOL1. The proteolytic processing to yield cerebellin seems to occur either prior to the secretion by presynaptic neurons and subsequent oligomerization or in some other location after release of the mature protein. Post-translationally, sialoglycoprotein. As to expression, in the Purkinje cells postsynaptic structures. In the cerebellum, cerebellin is much less abundant than [des-Ser1]-cerebellin.

It is found in the secreted. The protein resides in the postsynaptic cell membrane. Functionally, required for synapse integrity and synaptic plasticity. During cerebellar synapse formation, essential for the matching and maintenance of pre- and post-synaptic elements at parallel fiber-Purkinje cell synapses, the establishment of the proper pattern of climbing fiber-Purkinje cell innervation, and induction of long-term depression at parallel fiber-Purkinje cell synapses. Plays a role as a synaptic organizer that acts bidirectionally on both pre- and post-synaptic components. On the one hand induces accumulation of synaptic vesicles in the pre-synaptic part by binding with NRXN1 and in other hand induces clustering of GRID2 and its associated proteins at the post-synaptic site through association of GRID2. NRXN1-CBLN1-GRID2 complex directly induces parallel fiber protrusions that encapsulate spines of Purkinje cells leading to accumulation of GRID2 and synaptic vesicles. Required for CBLN3 export from the endoplasmic reticulum and secretion. NRXN1-CBLN1-GRID2 complex mediates the D-Serine-dependent long term depression signals and AMPA receptor endocytosis. Essential for long-term maintenance but not establishment of excitatory synapses. Inhibits the formation and function of inhibitory GABAergic synapses in cerebellar Purkinje cells. In terms of biological role, the cerebellin peptide exerts neuromodulatory functions. Directly stimulates norepinephrine release via the adenylate cyclase/PKA-dependent signaling pathway; and indirectly enhances adrenocortical secretion in vivo, through a paracrine mechanism involving medullary catecholamine release. The protein is Cerebellin-1 (CBLN1) of Homo sapiens (Human).